The sequence spans 208 residues: Small ribosomal subunit protein uS9c (208 aa).

The N-terminal 52 residues, 1–52 (MASITNLASSLSSLSFSSQVSQRPNTISFPRANSVFALPAKSARRASLSITA), are a transit peptide targeting the chloroplast.

It belongs to the universal ribosomal protein uS9 family.

The protein resides in the plastid. It localises to the chloroplast. Its function is as follows. Binds directly to 16S ribosomal RNA. In Arabidopsis thaliana (Mouse-ear cress), this protein is Small ribosomal subunit protein uS9c (RPS9).